A 160-amino-acid polypeptide reads, in one-letter code: Protein-export protein SecB (160 aa).

The protein belongs to the SecB family. Homotetramer, a dimer of dimers. One homotetramer interacts with 1 SecA dimer.

Its subcellular location is the cytoplasm. In terms of biological role, one of the proteins required for the normal export of preproteins out of the cell cytoplasm. It is a molecular chaperone that binds to a subset of precursor proteins, maintaining them in a translocation-competent state. It also specifically binds to its receptor SecA. This Rhodospirillum rubrum (strain ATCC 11170 / ATH 1.1.1 / DSM 467 / LMG 4362 / NCIMB 8255 / S1) protein is Protein-export protein SecB.